The primary structure comprises 647 residues: 1-deoxy-D-xylulose-5-phosphate synthase (647 aa).

Residues histidine 88 and 129-131 (GHA) contribute to the thiamine diphosphate site. Aspartate 160 is a Mg(2+) binding site. Thiamine diphosphate is bound by residues 161–162 (GA), asparagine 189, tyrosine 300, and glutamate 377. Residue asparagine 189 participates in Mg(2+) binding.

This sequence belongs to the transketolase family. DXPS subfamily. In terms of assembly, homodimer. Mg(2+) is required as a cofactor. The cofactor is thiamine diphosphate.

It carries out the reaction D-glyceraldehyde 3-phosphate + pyruvate + H(+) = 1-deoxy-D-xylulose 5-phosphate + CO2. The protein operates within metabolic intermediate biosynthesis; 1-deoxy-D-xylulose 5-phosphate biosynthesis; 1-deoxy-D-xylulose 5-phosphate from D-glyceraldehyde 3-phosphate and pyruvate: step 1/1. Functionally, catalyzes the acyloin condensation reaction between C atoms 2 and 3 of pyruvate and glyceraldehyde 3-phosphate to yield 1-deoxy-D-xylulose-5-phosphate (DXP). In Dehalococcoides mccartyi (strain ATCC BAA-2266 / KCTC 15142 / 195) (Dehalococcoides ethenogenes (strain 195)), this protein is 1-deoxy-D-xylulose-5-phosphate synthase.